A 593-amino-acid chain; its full sequence is La-related protein 7 (593 aa).

Over residues 1–11 (MTAIETDTPSN) the composition is skewed to polar residues. Residues 1-28 (MTAIETDTPSNKVKEDESTDLRKDREKK) are disordered. The segment covering 12 to 24 (KVKEDESTDLRKD) has biased composition (basic and acidic residues). Residues 30–121 (RSRVKQLLAD…RRRFPLGEKP (92 aa)) form the HTH La-type RNA-binding domain. One can recognise an RRM domain in the interval 127 to 205 (RTVYVELLPK…PRKAGMFPKT (79 aa)). The segment at 191 to 363 (PPEEAPRKAG…STEEEKDAVD (173 aa)) is disordered. Residues 231 to 240 (KKKKKKKSKA) are compositionally biased toward basic residues. The span at 248–259 (AEEDTKEQDMDI) shows a compositional bias: acidic residues. 3 stretches are compositionally biased toward basic and acidic residues: residues 295–307 (ERAE…EKVR), 314–340 (SSSE…DEKP), and 348–363 (QECK…DAVD). The xRRM domain maps to 461–574 (QFVCGVIGKI…TEKLIAKAEK (114 aa)).

Belongs to the LARP7 family. In terms of assembly, core component of the 7SK RNP complex. Associates with box C/D small nucleolar ribonucleoprotein (snoRNP) complexes.

Its subcellular location is the nucleus. It localises to the nucleoplasm. RNA-binding protein that specifically binds distinct small nuclear RNA (snRNAs) and regulates their processing and function. Specifically binds the 7SK snRNA (7SK RNA) and acts as a core component of the 7SK ribonucleoprotein (RNP) complex, thereby acting as a negative regulator of transcription elongation by RNA polymerase II. The 7SK RNP complex sequesters the positive transcription elongation factor b (P-TEFb) in a large inactive 7SK RNP complex preventing RNA polymerase II phosphorylation and subsequent transcriptional elongation. The 7SK RNP complex also promotes snRNA gene transcription by RNA polymerase II via interaction with the little elongation complex (LEC). LARP7 specifically binds to the highly conserved 3'-terminal U-rich stretch of 7SK RNA; on stimulation, remains associated with 7SK RNA, whereas P-TEFb is released from the complex. LARP7 also acts as a regulator of mRNA splicing fidelity by promoting U6 snRNA processing. Specifically binds U6 snRNAs and associates with a subset of box C/D RNP complexes: promotes U6 snRNA 2'-O-methylation by facilitating U6 snRNA loading into box C/D RNP complexes. U6 snRNA 2'-O-methylation is required for mRNA splicing fidelity. This chain is La-related protein 7, found in Xenopus tropicalis (Western clawed frog).